Reading from the N-terminus, the 232-residue chain is Uridylate kinase (232 aa).

13–14 (GS) provides a ligand contact to ATP. UMP is bound at residue Gly52. ATP contacts are provided by Gly53 and Arg57. UMP-binding positions include Asp74 and 122-128 (LQPGQST). 3 residues coordinate ATP: Thr147, Tyr153, and Asp156.

The protein belongs to the UMP kinase family. As to quaternary structure, homohexamer.

The protein resides in the cytoplasm. It carries out the reaction UMP + ATP = UDP + ADP. The protein operates within pyrimidine metabolism; CTP biosynthesis via de novo pathway; UDP from UMP (UMPK route): step 1/1. With respect to regulation, inhibited by UTP. Catalyzes the reversible phosphorylation of UMP to UDP. This chain is Uridylate kinase, found in Thermofilum pendens (strain DSM 2475 / Hrk 5).